An 89-amino-acid polypeptide reads, in one-letter code: Small ribosomal subunit protein uS15 (89 aa).

Residues 1–11 (MSITAERKAEV) are compositionally biased toward basic and acidic residues. Positions 1–24 (MSITAERKAEVIKTNAKKAGDTGS) are disordered.

The protein belongs to the universal ribosomal protein uS15 family. As to quaternary structure, part of the 30S ribosomal subunit. Forms a bridge to the 50S subunit in the 70S ribosome, contacting the 23S rRNA.

Functionally, one of the primary rRNA binding proteins, it binds directly to 16S rRNA where it helps nucleate assembly of the platform of the 30S subunit by binding and bridging several RNA helices of the 16S rRNA. Forms an intersubunit bridge (bridge B4) with the 23S rRNA of the 50S subunit in the ribosome. In Afipia carboxidovorans (strain ATCC 49405 / DSM 1227 / KCTC 32145 / OM5) (Oligotropha carboxidovorans), this protein is Small ribosomal subunit protein uS15.